The chain runs to 426 residues: Trophoblast glycoprotein (426 aa).

The N-terminal stretch at 1–31 (MPGAGSRGPSAGDGRLRLARLALVLLGWVSA) is a signal peptide. Residues 32-361 (SAPSSSVPSS…AVLPQSLQTS (330 aa)) are Extracellular-facing. Residues 33 to 47 (APSSSVPSSSTSPAA) show a composition bias toward low complexity. The tract at residues 33-53 (APSSSVPSSSTSPAAFLASGS) is disordered. The LRRNT domain occupies 53-91 (SAQPPPAERCPAACECSEAARTVKCVNRNLLEVPADLPP). 2 cysteine pairs are disulfide-bonded: Cys-62–Cys-68 and Cys-66–Cys-77. 7 LRR repeats span residues 92-113 (YVRN…AFAR), 116-139 (PLAD…GAFE), 141-163 (LPGL…FAFA), 172-210 (PSPL…AALR), 215-238 (LRGL…LLAQ), 239-261 (LPSL…ASFR), and 262-281 (NLTH…VLHN). Asn-124 is a glycosylation site (N-linked (GlcNAc...) asparagine). N-linked (GlcNAc...) asparagine glycosylation occurs at Asn-281. In terms of domain architecture, LRRCT spans 289–352 (GLAHVKVFLD…LNSSDLDCDA (64 aa)). 2 disulfides stabilise this stretch: Cys-304-Cys-329 and Cys-306-Cys-350. The chain crosses the membrane as a helical span at residues 362-382 (YVFLGIVLALIGAIFLLVLYL). Topologically, residues 383–426 (NRKGIKKWMHNIRDACRDHMEGYHYRYEINADPRLTNLSSNSDV) are cytoplasmic. A Phosphoserine modification is found at Ser-424.

Post-translationally, highly glycosylated. Highly expressed in embryo and placenta. In adult, expressed only in brain and ovary. Not detected in kidney small intestine, heart, spleen, testis, liver, lung, thymus and stomach.

Its subcellular location is the cell membrane. Its function is as follows. May function as an inhibitor of Wnt/beta-catenin signaling by indirectly interacting with LRP6 and blocking Wnt3a-dependent LRP6 internalization. The polypeptide is Trophoblast glycoprotein (Tpbg) (Mus musculus (Mouse)).